Here is a 239-residue protein sequence, read N- to C-terminus: MLLPQPLIHGRLVSRYKRFFADLVLDDGQEITAHCPNPGAMLGVKDAGQGAWVSWSDDPKRKLAYTLQMVEQGNALVGINTLLPNKLVAEALAADALPELSGYATIKPEVKYAEASRVDFLLTHPDRPPCWLEVKNCHFSRTPGLAEFPDCKAQRSTRHLEDLSAQVREGHRAVVLFVVQREDCETFSACAELDPAFAAGLEAAAKAGVEVLVYACEMGTQAVRIARRILWSHAHLTAI.

This sequence belongs to the SfsA family.

The protein is Sugar fermentation stimulation protein homolog of Caulobacter vibrioides (strain ATCC 19089 / CIP 103742 / CB 15) (Caulobacter crescentus).